The primary structure comprises 371 residues: AA9 family lytic polysaccharide monooxygenase B (371 aa).

The signal sequence occupies residues 1–25 (MSIAKIAGVVLGSAALVAGHGYVSG). Cu(2+)-binding residues include H20 and H104. Intrachain disulfides connect C74–C194 and C115–C119. The N-linked (GlcNAc...) asparagine glycan is linked to N154. Positions 180 and 189 each coordinate O2. Position 191 (Y191) interacts with Cu(2+). The interval 304–332 (HVQATSSSAAASTPTASSGASSGSGSSSS) is disordered. Positions 307–332 (ATSSSAAASTPTASSGASSGSGSSSS) are enriched in low complexity.

Belongs to the polysaccharide monooxygenase AA9 family. It depends on Cu(2+) as a cofactor.

Its subcellular location is the secreted. The enzyme catalyses [(1-&gt;4)-beta-D-glucosyl]n+m + reduced acceptor + O2 = 4-dehydro-beta-D-glucosyl-[(1-&gt;4)-beta-D-glucosyl]n-1 + [(1-&gt;4)-beta-D-glucosyl]m + acceptor + H2O.. Its function is as follows. Lytic polysaccharide monooxygenase (LPMO) that depolymerizes crystalline and amorphous polysaccharides via the oxidation of scissile alpha- or beta-(1-4)-glycosidic bonds, yielding C1 and C4 oxidation products. Catalysis by LPMOs requires the reduction of the active-site copper from Cu(II) to Cu(I) by a reducing agent and H(2)O(2) or O(2) as a cosubstrate. In addition to cellulose, also cleaves the beta-(1!4)-glucan backbone of tamarind xyloglucan, irrespective of substitutions which contrasts with AA9A xyloglucan cleavage activity. In Aspergillus tamarii, this protein is AA9 family lytic polysaccharide monooxygenase B.